A 258-amino-acid polypeptide reads, in one-letter code: Phosphate import ATP-binding protein PstB (258 aa).

The region spanning 5 to 247 (LDLKGVNIYY…EKIFSNPSQK (243 aa)) is the ABC transporter domain. 37 to 44 (GPSGCGKT) provides a ligand contact to ATP.

Belongs to the ABC transporter superfamily. Phosphate importer (TC 3.A.1.7) family. As to quaternary structure, the complex is composed of two ATP-binding proteins (PstB), two transmembrane proteins (PstC and PstA) and a solute-binding protein (PstS).

The protein resides in the cell membrane. It carries out the reaction phosphate(out) + ATP + H2O = ADP + 2 phosphate(in) + H(+). In terms of biological role, part of the ABC transporter complex PstSACB involved in phosphate import. Responsible for energy coupling to the transport system. The sequence is that of Phosphate import ATP-binding protein PstB from Mycolicibacterium paratuberculosis (strain ATCC BAA-968 / K-10) (Mycobacterium paratuberculosis).